A 376-amino-acid chain; its full sequence is Probable tRNA sulfurtransferase (376 aa).

The region spanning 51 to 152 is the THUMP domain; the sequence is EENLKNLKYV…KNSVYVFDKS (102 aa). Residues 170-171, 195-196, R252, G274, and Q283 contribute to the ATP site; these read LI and TF.

This sequence belongs to the ThiI family.

The protein resides in the cytoplasm. The enzyme catalyses [ThiI sulfur-carrier protein]-S-sulfanyl-L-cysteine + a uridine in tRNA + 2 reduced [2Fe-2S]-[ferredoxin] + ATP + H(+) = [ThiI sulfur-carrier protein]-L-cysteine + a 4-thiouridine in tRNA + 2 oxidized [2Fe-2S]-[ferredoxin] + AMP + diphosphate. It catalyses the reaction [ThiS sulfur-carrier protein]-C-terminal Gly-Gly-AMP + S-sulfanyl-L-cysteinyl-[cysteine desulfurase] + AH2 = [ThiS sulfur-carrier protein]-C-terminal-Gly-aminoethanethioate + L-cysteinyl-[cysteine desulfurase] + A + AMP + 2 H(+). It participates in cofactor biosynthesis; thiamine diphosphate biosynthesis. Catalyzes the ATP-dependent transfer of a sulfur to tRNA to produce 4-thiouridine in position 8 of tRNAs, which functions as a near-UV photosensor. Also catalyzes the transfer of sulfur to the sulfur carrier protein ThiS, forming ThiS-thiocarboxylate. This is a step in the synthesis of thiazole, in the thiamine biosynthesis pathway. The sulfur is donated as persulfide by IscS. The protein is Probable tRNA sulfurtransferase of Mycoplasmopsis synoviae (strain 53) (Mycoplasma synoviae).